Reading from the N-terminus, the 326-residue chain is Light-induced protein, chloroplastic (326 aa).

Residues 1–63 (MASISSLNQI…TNPKPKFTAQ (63 aa)) constitute a chloroplast transit peptide.

The protein belongs to the LIPC family. Associates with the major light-harvesting antenna complex polypeptides of the PSII oxygen-evolving complex. In terms of tissue distribution, expressed at high levels in leaves and in the petals and anthers of flowers.

The protein resides in the plastid. It localises to the chloroplast thylakoid membrane. Functionally, required for normal plant growth. May be both photoprotective and play an ancillary role in photosynthesis. May structurally stabilize thylakoids during osmotic and oxidative stress. This Solanum demissum (Wild potato) protein is Light-induced protein, chloroplastic.